We begin with the raw amino-acid sequence, 333 residues long: Phosphate acyltransferase (333 aa).

The protein belongs to the PlsX family. As to quaternary structure, homodimer. Probably interacts with PlsY.

The protein localises to the cytoplasm. It carries out the reaction a fatty acyl-[ACP] + phosphate = an acyl phosphate + holo-[ACP]. It functions in the pathway lipid metabolism; phospholipid metabolism. Its function is as follows. Catalyzes the reversible formation of acyl-phosphate (acyl-PO(4)) from acyl-[acyl-carrier-protein] (acyl-ACP). This enzyme utilizes acyl-ACP as fatty acyl donor, but not acyl-CoA. This chain is Phosphate acyltransferase, found in Cellvibrio japonicus (strain Ueda107) (Pseudomonas fluorescens subsp. cellulosa).